We begin with the raw amino-acid sequence, 179 residues long: Cytochrome b6-f complex iron-sulfur subunit (179 aa).

The chain crosses the membrane as a helical span at residues 21-43 (LLTFGSVTGVALGALYPVVNYFI). The Rieske domain occupies 61 to 162 (GNDVVLSKFL…VSVTDDKVFL (102 aa)). Residues Cys108, His110, Cys126, and His129 each contribute to the [2Fe-2S] cluster site. Cys113 and Cys128 form a disulfide bridge.

The protein belongs to the Rieske iron-sulfur protein family. The 4 large subunits of the cytochrome b6-f complex are cytochrome b6, subunit IV (17 kDa polypeptide, PetD), cytochrome f and the Rieske protein, while the 4 small subunits are PetG, PetL, PetM and PetN. The complex functions as a dimer. It depends on [2Fe-2S] cluster as a cofactor.

The protein resides in the cellular thylakoid membrane. It carries out the reaction 2 oxidized [plastocyanin] + a plastoquinol + 2 H(+)(in) = 2 reduced [plastocyanin] + a plastoquinone + 4 H(+)(out). In terms of biological role, component of the cytochrome b6-f complex, which mediates electron transfer between photosystem II (PSII) and photosystem I (PSI), cyclic electron flow around PSI, and state transitions. This chain is Cytochrome b6-f complex iron-sulfur subunit, found in Synechococcus elongatus (strain ATCC 33912 / PCC 7942 / FACHB-805) (Anacystis nidulans R2).